The primary structure comprises 84 residues: UPF0473 protein CPF_2030 (84 aa).

Belongs to the UPF0473 family.

The chain is UPF0473 protein CPF_2030 from Clostridium perfringens (strain ATCC 13124 / DSM 756 / JCM 1290 / NCIMB 6125 / NCTC 8237 / Type A).